We begin with the raw amino-acid sequence, 151 residues long: UPF0178 protein CJA_1978 (151 aa).

The protein belongs to the UPF0178 family.

In Cellvibrio japonicus (strain Ueda107) (Pseudomonas fluorescens subsp. cellulosa), this protein is UPF0178 protein CJA_1978.